The chain runs to 666 residues: NADH-ubiquinone oxidoreductase chain 5 (666 aa).

Transmembrane regions (helical) follow at residues 3 to 23 (LLILFLPLLGSLISGFGGRWL), 31 to 51 (FSTLCVVVSSLFSLLAFFEIG), 59 to 78 (IFLVSWIKSGAFYVSWGFLF), 82 to 101 (TVTMLVVITLVSSLVHIYSI), 119 to 139 (IFTFFMLILVTADNLIQMFLG), 168 to 190 (LIVNRVGDFGLSLGIFLIFWVFN), 211 to 231 (FLGFKLHVLTLISLFLFIGAI), 251 to 271 (TPVSALIHAATMVTAGVFLMI), 283 to 303 (ILFILITFGSLTAFFAAVTGV), 311 to 333 (VIAYSTCSQLGYMIFSCGMSCYD), 337 to 357 (FHLANHAFFKALLFLSAGSVI), 375 to 395 (FMPLTYSVMLIGTLALIGFPF), 421 to 441 (YISFACWLGTMSVFFTSFYSF), 467 to 487 (LLMIFPLIILSIGSIFAGYLI), 524 to 544 (WLPFILSLLGIFFASFVQIFL), 572 to 594 (VLYNRLIVLPILNFGYSISFKIL), and 629 to 649 (YLFFMIFTFCSFSIILVYSYI).

This sequence belongs to the complex I subunit 5 family.

The protein resides in the mitochondrion inner membrane. It carries out the reaction a ubiquinone + NADH + 5 H(+)(in) = a ubiquinol + NAD(+) + 4 H(+)(out). Its function is as follows. Core subunit of the mitochondrial membrane respiratory chain NADH dehydrogenase (Complex I) that is believed to belong to the minimal assembly required for catalysis. Complex I functions in the transfer of electrons from NADH to the respiratory chain. The immediate electron acceptor for the enzyme is believed to be ubiquinone. The polypeptide is NADH-ubiquinone oxidoreductase chain 5 (ND5) (Chondrus crispus (Carrageen Irish moss)).